The chain runs to 671 residues: Transcription factor xilB (671 aa).

Residues 11 to 46 constitute a DNA-binding region (zn(2)-C6 fungal-type); that stretch reads CHSCYTRKQKASESDSICDRQYPCNHCTRRRRPEEC. The interval 48-90 is disordered; that stretch reads YGPPPVKVPSCPPVPADQSETQPRPVESARPTRETPVDDSEAH. The segment covering 49–62 has biased composition (pro residues); the sequence is GPPPVKVPSCPPVP. The span at 77–90 shows a compositional bias: basic and acidic residues; sequence RPTRETPVDDSEAH. Residues 148–593 are fungal transcription factor domain; the sequence is PERQIIDFLV…ATLLFARSVQ (446 aa). Positions 629 to 650 are disordered; it reads WPSLEAGDPYSMPDNFPSMAQD.

It is found in the nucleus. Functionally, transcription factor; part of the gene cluster that mediates the biosynthesis of the 6-methyl-2-pyrone derivative xylariolide D. May play a role in the regulation of the expression of the highly reducing polyketide synthase xilA and the cytochroe P450 monooxygenase xilC. In Penicillium rubens (strain ATCC 28089 / DSM 1075 / NRRL 1951 / Wisconsin 54-1255) (Penicillium chrysogenum), this protein is Transcription factor xilB.